The chain runs to 267 residues: Glutamate racemase (267 aa).

Residues D13–S14 and Y45–S46 each bind substrate. The active-site Proton donor/acceptor is the C77. Position 78–79 (N78–T79) interacts with substrate. C188 acts as the Proton donor/acceptor in catalysis. T189–H190 is a binding site for substrate.

Belongs to the aspartate/glutamate racemases family.

It carries out the reaction L-glutamate = D-glutamate. It functions in the pathway cell wall biogenesis; peptidoglycan biosynthesis. Functionally, provides the (R)-glutamate required for cell wall biosynthesis. In Histophilus somni (strain 2336) (Haemophilus somnus), this protein is Glutamate racemase.